Reading from the N-terminus, the 605-residue chain is UvrABC system protein C (605 aa).

Residues 14–92 form the GIY-YIG domain; it reads QSCGVYKMVG…IKSLKPLYNI (79 aa). A UVR domain is found at 202–237; it reads KEVKEQLLFTMRKCSSEENYELAAIYRDRVKFLEQI.

It belongs to the UvrC family. As to quaternary structure, interacts with UvrB in an incision complex.

The protein localises to the cytoplasm. In terms of biological role, the UvrABC repair system catalyzes the recognition and processing of DNA lesions. UvrC both incises the 5' and 3' sides of the lesion. The N-terminal half is responsible for the 3' incision and the C-terminal half is responsible for the 5' incision. The sequence is that of UvrABC system protein C from Wolbachia pipientis wMel.